A 1034-amino-acid chain; its full sequence is N-acetyl-beta-glucosaminyl-glycoprotein 4-beta-N-acetylgalactosaminyltransferase 1 (1034 aa).

Residues 1-12 (MPWFPVKKVRKQ) are Cytoplasmic-facing. Residues 13–31 (MKLLLLLLLLTCAAWLTYV) traverse the membrane as a helical; Signal-anchor for type II membrane protein segment. At 32 to 1034 (HRSLVRPGRA…SRKGARAQRS (1003 aa)) the chain is on the lumenal side. The segment at 51–104 (DGEKLTGVTDSRGVRVPSSTQRSEDSSESHEEEQAPEGRGPNMLFPGGPRKPPP) is disordered. Basic and acidic residues predominate over residues 72-83 (RSEDSSESHEEE). Residue Asn-106 is glycosylated (N-linked (GlcNAc...) asparagine). A PA14 domain is found at 109–279 (HQTPPWREEF…LKFEIIDSAH (171 aa)). 2 disordered regions span residues 450–486 (PTDA…DEQT) and 556–600 (RVQL…QLHG). Positions 461–473 (TPTPAASTGTTAS) are enriched in low complexity. Asn-611 is a glycosylation site (N-linked (GlcNAc...) asparagine). Disordered regions lie at residues 626-669 (SQVS…PLGR) and 782-801 (GDED…HPDS). Positions 636–661 (EGEEGEEDGAPGDEATSEDSEEEEEP) are enriched in acidic residues.

It belongs to the chondroitin N-acetylgalactosaminyltransferase family.

It localises to the golgi apparatus. Its subcellular location is the golgi stack membrane. It carries out the reaction an N-acetyl-beta-D-glucosaminyl derivative + UDP-N-acetyl-alpha-D-galactosamine = an N-acetyl-beta-D-galactosaminyl-(1-&gt;4)-N-acetyl-beta-D-glucosaminyl derivative + UDP + H(+). In terms of biological role, transfers N-acetylgalactosamine (GalNAc) from UDP-GalNAc to N-acetylglucosamine-beta-benzyl with a beta-1,4-linkage to form N,N'-diacetyllactosediamine, GalNAc-beta-1,4-GlcNAc structures in N-linked glycans and probably O-linked glycans. The chain is N-acetyl-beta-glucosaminyl-glycoprotein 4-beta-N-acetylgalactosaminyltransferase 1 (B4galnt4) from Mus musculus (Mouse).